The primary structure comprises 1050 residues: TSC22 domain family protein 1 (1050 aa).

The tract at residues 1-99 (MHQPPESTAA…SQAQLQGQPL (99 aa)) is required for interaction with TGFBR1 and promotion of TGF-beta signaling. Disordered stretches follow at residues 22–111 (MAHP…KKSG), 126–285 (ISSN…VSSA), 445–479 (QTPT…SVGS), 511–531 (DFSS…VQLQ), 581–609 (LAQP…QLQY), 720–740 (VQPP…PPSS), 795–847 (QLPT…GSLV), and 879–919 (SLAQ…VSDG). Low complexity predominate over residues 38 to 55 (ASALSAAGTGVSGAAPSS). Positions 58–71 (FPPPSSLLQPPPPA) are enriched in pro residues. Residues 85–97 (SLNLLSQAQLQGQ) show a composition bias toward low complexity. The span at 134–143 (EDTESYDDLD) shows a compositional bias: acidic residues. Over residues 217–241 (HPHHLHHHHHIHHGHHLHHGHHHSS) the composition is skewed to basic residues. Residue serine 265 is modified to Phosphoserine. The span at 458–476 (TSGSSVSSSVSTLSHYTES) shows a compositional bias: low complexity. Positions 586–603 (LPYPQPAPPVQTPLPGAP) are enriched in pro residues. Low complexity predominate over residues 906 to 919 (LSGDSGGVSAVSDG). A leucine-zipper region spans residues 983–1004 (LKEQIKELIEKNSQLEQENNLL). The interval 1015 to 1050 (QFQAQLQTGSPPATTQPQGTTQPPAQPASQGSGSTA) is disordered. Over residues 1021 to 1050 (QTGSPPATTQPQGTTQPPAQPASQGSGSTA) the composition is skewed to low complexity.

Belongs to the TSC-22/Dip/Bun family. In terms of assembly, forms homodimers. Forms heterodimers. Component of a complex composed of TSC22D1 (via N-terminus), TGFBR1 and TGFBR2; the interaction between TSC22D1 and TGFBR1 is inhibited by SMAD7 and promoted by TGFB1. Interacts with SMAD7; the interaction requires TGF-beta and the interaction is inhibited by TGFBR1. Interacts with TPT1/fortilin; interaction results in the destabilization of TSC22D1 protein and prevents TSC22D1-mediated apoptosis. Interacts with SMAD4 (via N-terminus). Interacts with ACVRL1/ALK1, ACVR1/ALK2, BMPR1A/ALK3, ACVR1B/ALK4, BMPR1B/ALK6, ACVR2A/ACTRII, and BMPR2. Interacts with SMAD6. Interacts with TFE3; the interaction is enhanced in the presence of TGF-beta. Forms a heterodimer with TSC22D4/THG1. As to quaternary structure, forms a heterodimer with TSC22D4/THG1. Interacts with histone H1-2. Interacts with GNL3. In terms of tissue distribution, ubiquitously expressed, abundantly expressed in testis, ovary, uterus, and lung. Expressed in cardiomyocytes.

It localises to the cytoplasm. It is found in the nucleus. The protein localises to the cell membrane. Its subcellular location is the mitochondrion. Transcriptional repressor. Acts on the C-type natriuretic peptide (CNP) promoter. Acts to promote CASP3-mediated apoptosis. Positively regulates TGF-beta signaling by interacting with SMAD7 which inhibits binding of SMAD7 to TGFBR1, preventing recruitment of SMURF ubiquitin ligases to TGFBR1 and inhibiting SMURF-mediated ubiquitination and degradation of TGFBR1. Contributes to enhancement of TGF-beta signaling by binding to and modulating the transcription activator activity of SMAD4. Promotes TGF-beta-induced transcription of COL1A2; via its interaction with TFE3 at E-boxes in the gene proximal promoter. Plays a role in the repression of hematopoietic precursor cell growth. Promotes IL2 deprivation-induced apoptosis in T-lymphocytes, via repression of TSC22D3/GILZ transcription and activation of the caspase cascade. In terms of biological role, may act to negatively regulate TGFB3 signaling and thereby inhibit cell death in mammary gland cells. Functionally, positively regulates cell death in response to TGFB3 during mammary gland involution. The sequence is that of TSC22 domain family protein 1 from Rattus norvegicus (Rat).